A 261-amino-acid chain; its full sequence is Ethanolamine ammonia-lyase small subunit (261 aa).

Adenosylcob(III)alamin contacts are provided by Val-158, Glu-179, and Cys-208.

Belongs to the EutC family. The basic unit is a heterodimer which dimerizes to form tetramers. The heterotetramers trimerize; 6 large subunits form a core ring with 6 small subunits projecting outwards. Adenosylcob(III)alamin is required as a cofactor.

Its subcellular location is the bacterial microcompartment. It catalyses the reaction ethanolamine = acetaldehyde + NH4(+). It functions in the pathway amine and polyamine degradation; ethanolamine degradation. Its function is as follows. Catalyzes the deamination of various vicinal amino-alcohols to oxo compounds. Allows this organism to utilize ethanolamine as the sole source of nitrogen and carbon in the presence of external vitamin B12. This is Ethanolamine ammonia-lyase small subunit from Bradyrhizobium diazoefficiens (strain JCM 10833 / BCRC 13528 / IAM 13628 / NBRC 14792 / USDA 110).